The sequence spans 32 residues: Cytochrome b6-f complex subunit 7 (32 aa).

Residues 9 to 29 traverse the membrane as a helical segment; that stretch reads AILSSVLVLVGLAVGFLLLKV.

The protein belongs to the PetM family. In terms of assembly, the 4 large subunits of the cytochrome b6-f complex are cytochrome b6, subunit IV (17 kDa polypeptide, PetD), cytochrome f and the Rieske protein, while the 4 small subunits are PetG, PetL, PetM and PetN. The complex functions as a dimer.

It localises to the plastid. The protein localises to the chloroplast thylakoid membrane. Functionally, component of the cytochrome b6-f complex, which mediates electron transfer between photosystem II (PSII) and photosystem I (PSI), cyclic electron flow around PSI, and state transitions. The protein is Cytochrome b6-f complex subunit 7 of Porphyra purpurea (Red seaweed).